The sequence spans 164 residues: Ribosome maturation factor RimM (164 aa).

Residues 92 to 164 form the PRC barrel domain; it reads PDSEYYVANL…FVVIVPPEFI (73 aa).

It belongs to the RimM family. As to quaternary structure, binds ribosomal protein uS19.

It localises to the cytoplasm. Its function is as follows. An accessory protein needed during the final step in the assembly of 30S ribosomal subunit, possibly for assembly of the head region. Essential for efficient processing of 16S rRNA. May be needed both before and after RbfA during the maturation of 16S rRNA. It has affinity for free ribosomal 30S subunits but not for 70S ribosomes. This chain is Ribosome maturation factor RimM, found in Orientia tsutsugamushi (strain Ikeda) (Rickettsia tsutsugamushi).